We begin with the raw amino-acid sequence, 148 residues long: Large ribosomal subunit protein uL15 (148 aa).

Residues 14–54 (HRKKRVGCGEGGGHGKTSGRGGKGQTARSGSSIRPGFEGGQ) are disordered. The span at 21-37 (CGEGGGHGKTSGRGGKG) shows a compositional bias: gly residues.

Belongs to the universal ribosomal protein uL15 family. In terms of assembly, part of the 50S ribosomal subunit.

Its function is as follows. Binds to the 23S rRNA. This chain is Large ribosomal subunit protein uL15, found in Opitutus terrae (strain DSM 11246 / JCM 15787 / PB90-1).